A 130-amino-acid polypeptide reads, in one-letter code: Small ribosomal subunit protein uS8 (130 aa).

This sequence belongs to the universal ribosomal protein uS8 family. As to quaternary structure, part of the 30S ribosomal subunit. Contacts proteins S5 and S12.

Its function is as follows. One of the primary rRNA binding proteins, it binds directly to 16S rRNA central domain where it helps coordinate assembly of the platform of the 30S subunit. This chain is Small ribosomal subunit protein uS8, found in Phytoplasma mali (strain AT).